Here is a 68-residue protein sequence, read N- to C-terminus: MIRMGFFLTLTVAVLLTSLTCSEAVPTDKREMERLFDRILLKDQRQCPYCVVHCCPPSYCQASGCRPP.

An N-terminal signal peptide occupies residues 1 to 24; that stretch reads MIRMGFFLTLTVAVLLTSLTCSEA. Positions 25–45 are excised as a propeptide; the sequence is VPTDKREMERLFDRILLKDQR. Gln46 bears the Pyrrolidone carboxylic acid mark. 3 disulfide bridges follow: Cys47-Cys55, Cys50-Cys60, and Cys54-Cys65.

It belongs to the conotoxin U superfamily. In terms of tissue distribution, expressed by the venom duct.

The protein resides in the secreted. Functionally, probable toxin. This Conus amadis (Amadis cone) protein is Conotoxin Am6.8.